A 538-amino-acid polypeptide reads, in one-letter code: Syncytin-1 (538 aa).

Residues 1 to 20 (MALPYHIFLFTVLLPSFTLT) form the signal peptide. The Extracellular portion of the chain corresponds to 21 to 443 (APPPCRCMTS…NIGPWGLFSQ (423 aa)). N-linked (GlcNAc...) asparagine glycosylation is present at N169. The CXXC motif lies at 186-189 (CWMC). 3 cysteine pairs are disulfide-bonded: C186/C189, C186/C405, and C397/C404. Residues N208, N214, N234, N242, N245, and N281 are each glycosylated (N-linked (GlcNAc...) asparagine). Positions 320-340 (ILPFVMAAGVLGALGTGIGGI) are fusion peptide. The immunosuppression stretch occupies residues 380 to 396 (LQNRRALDLLTAERGGT). A CX6CC motif is present at residues 397-405 (CLFLGEECC). N-linked (GlcNAc...) asparagine glycosylation occurs at N409. Residues 444–464 (WMPWILPFLGPLAAIILLLLF) form a helical membrane-spanning segment. An essential for the fusiogenic function region spans residues 465 to 484 (GPCIFNLLVNFVSSRIEAVK). At 465 to 538 (GPCIFNLLVN…LLRPNSAGSS (74 aa)) the chain is on the cytoplasmic side. The segment at 501–538 (PLDWPASPRSDVNDIKGTPPEEISTAQPLLRPNSAGSS) is disordered.

It belongs to the gamma type-C retroviral envelope protein family. HERV class-I W env subfamily. The mature envelope protein (Env) consists of a trimer of SU-TM heterodimers attached probably by a labile interchain disulfide bond. Interacts with the C-type lectin CD209/DC-SIGN. Specific enzymatic cleavages in vivo yield mature proteins. Envelope glycoproteins are synthesized as an inactive precursor that is heavily N-glycosylated and processed likely by furin in the Golgi to yield the mature SU and TM proteins. The cleavage site between SU and TM requires the minimal sequence [KR]-X-[KR]-R. In terms of processing, the CXXC motif is highly conserved across a broad range of retroviral envelope proteins. It is thought to participate in the formation of a labile disulfide bond possibly with the CX6CC motif present in the transmembrane protein.

It is found in the cell membrane. The protein localises to the virion. In terms of biological role, this endogenous retroviral envelope protein has retained its original fusogenic properties and participates in trophoblast fusion and the formation of a syncytium during placenta morphogenesis. May recognize and induce fusion through binding of SLC1A4 and SLC1A5. Functionally, endogenous envelope proteins may have kept, lost or modified their original function during evolution. Retroviral envelope proteins mediate receptor recognition and membrane fusion during early infection. The surface protein (SU) mediates receptor recognition, while the transmembrane protein (TM) acts as a class I viral fusion protein. The protein may have at least 3 conformational states: pre-fusion native state, pre-hairpin intermediate state, and post-fusion hairpin state. During viral and target cell membrane fusion, the coiled coil regions (heptad repeats) assume a trimer-of-hairpins structure, positioning the fusion peptide in close proximity to the C-terminal region of the ectodomain. The formation of this structure appears to drive apposition and subsequent fusion of membranes. This is Syncytin-1 (ERVW-1) from Pongo pygmaeus (Bornean orangutan).